Reading from the N-terminus, the 231-residue chain is DNA mismatch repair protein MutH (231 aa).

It belongs to the MutH family.

The protein resides in the cytoplasm. Its function is as follows. Sequence-specific endonuclease that cleaves unmethylated GATC sequences. It is involved in DNA mismatch repair. The sequence is that of DNA mismatch repair protein MutH from Salmonella paratyphi C (strain RKS4594).